The following is a 50-amino-acid chain: Cuticle protein CP498 (50 aa).

Repeat copies occupy residues 6–23 (ATVG…LIQL) and 30–47 (ILEG…FVTY).

In terms of tissue distribution, calcified shell.

This Cancer pagurus (Rock crab) protein is Cuticle protein CP498.